The chain runs to 182 residues: ATP synthase subunit delta (182 aa).

The protein belongs to the ATPase delta chain family. F-type ATPases have 2 components, F(1) - the catalytic core - and F(0) - the membrane proton channel. F(1) has five subunits: alpha(3), beta(3), gamma(1), delta(1), epsilon(1). CF(0) has four main subunits: a(1), b(1), b'(1) and c(10-14). The alpha and beta chains form an alternating ring which encloses part of the gamma chain. F(1) is attached to F(0) by a central stalk formed by the gamma and epsilon chains, while a peripheral stalk is formed by the delta, b and b' chains.

The protein localises to the cellular thylakoid membrane. F(1)F(0) ATP synthase produces ATP from ADP in the presence of a proton or sodium gradient. F-type ATPases consist of two structural domains, F(1) containing the extramembraneous catalytic core and F(0) containing the membrane proton channel, linked together by a central stalk and a peripheral stalk. During catalysis, ATP synthesis in the catalytic domain of F(1) is coupled via a rotary mechanism of the central stalk subunits to proton translocation. In terms of biological role, this protein is part of the stalk that links CF(0) to CF(1). It either transmits conformational changes from CF(0) to CF(1) or is implicated in proton conduction. This Parasynechococcus marenigrum (strain WH8102) protein is ATP synthase subunit delta.